Here is a 223-residue protein sequence, read N- to C-terminus: Pre-protein VI (223 aa).

Positions 1-27 (MAYSRLAPHCGLPVYGHHIGNSEMSGG) are excised as a propeptide. The interval 28 to 51 (FSWSSLGSSLSSGLSRIGSFLGST) is amphipathic alpha-helix essential for membrane lytic activity. Positions 29 to 50 (SWSSLGSSLSSGLSRIGSFLGS) are involved in endosomal membrane lysis. Interaction with hexon protein regions lie at residues 45-71 (GSFLGSTAQRIGNSQGFQQAKEGFLKS) and 206-212 (LEDMLGD). Short sequence motifs (nuclear export signal) lie at residues 64-73 (AKEGFLKSGV) and 204-215 (SALEDMLGDGVC). The segment at 213–223 (GVCYRSKRYCY) is binds to importin alpha/beta, involved in hexon nuclear import.

Belongs to the adenoviridae protein VI family. Interacts with hexon protein; this interaction allows nuclear import of hexon trimers and possibly pre-capsid assembly. Interacts (via C-terminal NLS) with importin alpha/beta. In terms of assembly, interacts (via PPxY motif) with host NEDD4 ubiquitine ligase; this interaction might play a role in virus intracellular transport during entry. Part of a complex composed of the core-capsid bridging protein, the endosome lysis protein VI and the hexon-linking protein VIII; these interactions bridge the virus core to the capsid. Interacts with peripentonal hexons; this interaction stabilizes the capsid by gluing two peripentonal hexons together and joining them with an adjacent group-of-nine hexon. As to quaternary structure, heterodimer with the viral protease; disulfide-linked. Interacts with the viral protease. Post-translationally, ubiquitinated by Nedd4 following partial capsid disassembly; which might play a role in intracellular virus movement during entry. Contains the major nuclear import and export signals. Proteolytically removed during virion maturation. The processing of the C-terminus turns the precursor into a mature viral structural protein and abrogates its ability to promote hexon import and act as a potential chaperone protein.

The protein resides in the host nucleus. It localises to the host cytoplasm. It is found in the virion. In terms of biological role, during virus assembly, promotes hexon trimers nuclear import through nuclear pore complexes via an importin alpha/beta-dependent mechanism. By analogy to herpesviruses capsid assembly, might act as a chaperone to promote the formation of the icosahedral capsid. Functionally, structural component of the virion that provides increased stability to the particle shell through its interaction with the core-capsid bridging protein and the hexon-linking protein VIII. Fibers shedding during virus entry into host cell allows the endosome lysis protein to be exposed as a membrane-lytic peptide. Exhibits pH-independent membrane fragmentation activity and probably mediates viral rapid escape from host endosome via organellar membrane lysis. It is not clear if it then remains partially associated with the capsid and involved in the intracellular microtubule-dependent transport of capsid to the nucleus, or if it is lost during endosomal penetration. Its function is as follows. Cofactor that activates the viral protease. Binds to viral protease in a 1:1 ratio. This is Pre-protein VI from Pantherophis guttatus (Corn snake).